We begin with the raw amino-acid sequence, 114 residues long: DNA-directed RNA polymerase subunit omega (114 aa).

This sequence belongs to the RNA polymerase subunit omega family. In terms of assembly, the RNAP catalytic core consists of 2 alpha, 1 beta, 1 beta' and 1 omega subunit. When a sigma factor is associated with the core the holoenzyme is formed, which can initiate transcription.

It catalyses the reaction RNA(n) + a ribonucleoside 5'-triphosphate = RNA(n+1) + diphosphate. Its function is as follows. Promotes RNA polymerase assembly. Latches the N- and C-terminal regions of the beta' subunit thereby facilitating its interaction with the beta and alpha subunits. This chain is DNA-directed RNA polymerase subunit omega, found in Novosphingobium aromaticivorans (strain ATCC 700278 / DSM 12444 / CCUG 56034 / CIP 105152 / NBRC 16084 / F199).